The primary structure comprises 839 residues: Protein translocase subunit SecA (839 aa).

ATP-binding positions include Q85, 103–107, and D493; that span reads GEGKT. Over residues 780-790 the composition is skewed to basic and acidic residues; that stretch reads QIHEQERERAS. The segment at 780–839 is disordered; that stretch reads QIHEQERERASQRATTAAPQNIQSQQSANTDDLPKVERNEACPCGSGKKFKNCHGRKSFS. The span at 791-809 shows a compositional bias: polar residues; it reads QRATTAAPQNIQSQQSANT. Residues C821, C823, C832, and H833 each contribute to the Zn(2+) site. Residues 827–839 show a composition bias toward basic residues; sequence KKFKNCHGRKSFS.

The protein belongs to the SecA family. As to quaternary structure, monomer and homodimer. Part of the essential Sec protein translocation apparatus which comprises SecA, SecYEG and auxiliary proteins SecDF. Other proteins may also be involved. Requires Zn(2+) as cofactor.

It localises to the cell membrane. Its subcellular location is the cytoplasm. It catalyses the reaction ATP + H2O + cellular proteinSide 1 = ADP + phosphate + cellular proteinSide 2.. Part of the Sec protein translocase complex. Interacts with the SecYEG preprotein conducting channel. Has a central role in coupling the hydrolysis of ATP to the transfer of proteins into and across the cell membrane, serving as an ATP-driven molecular motor driving the stepwise translocation of polypeptide chains across the membrane. The protein is Protein translocase subunit SecA of Streptococcus pyogenes serotype M1.